Consider the following 1050-residue polypeptide: Transcription intermediary factor 1-alpha (1050 aa).

Lys7 participates in a covalent cross-link: Glycyl lysine isopeptide (Lys-Gly) (interchain with G-Cter in SUMO2). The span at 15-30 shows a compositional bias: low complexity; it reads ASAAASGGPSAAPSGE. A disordered region spans residues 15-44; sequence ASAAASGGPSAAPSGENEAESRQGPDSERG. Residues 33–44 are compositionally biased toward basic and acidic residues; it reads AESRQGPDSERG. An RING-type zinc finger spans residues 56–82; sequence CAVCHQNIQSRAPKLLPCLHSFCQRCL. Position 101 is a phosphothreonine (Thr101). Ser110 is modified (phosphoserine). B box-type zinc fingers lie at residues 158 to 211 and 218 to 259; these read KSNQ…VSPE and QRPV…YQFI. Positions 163, 166, 187, and 200 each coordinate Zn(2+). Residue Lys205 forms a Glycyl lysine isopeptide (Lys-Gly) (interchain with G-Cter in SUMO2) linkage. Zn(2+) contacts are provided by Cys223, His226, Cys246, and His251. A Glycyl lysine isopeptide (Lys-Gly) (interchain with G-Cter in SUMO2) cross-link involves residue Lys276. Residues 289-359 are a coiled coil; it reads NQIQNRIIEV…AGLSKQLEHV (71 aa). A disordered region spans residues 429 to 456; the sequence is ESQPQMPKQNPVVEQNSQPPSGLSSNQL. Over residues 431–456 the composition is skewed to polar residues; it reads QPQMPKQNPVVEQNSQPPSGLSSNQL. Residues Lys436 and Lys458 each participate in a glycyl lysine isopeptide (Lys-Gly) (interchain with G-Cter in SUMO2) cross-link. Omega-N-methylarginine is present on Arg469. 2 stretches are compositionally biased toward low complexity: residues 476 to 490 and 499 to 510; these read QVMA…RPAP and QGPIQQPSISHQ. The tract at residues 476 to 550 is disordered; the sequence is QVMAQRQQVQ…PPNQNIPRQA (75 aa). The segment covering 526–535 has biased composition (pro residues); it reads PNGPVLPPHP. Lys552 participates in a covalent cross-link: Glycyl lysine isopeptide (Lys-Gly) (interchain with G-Cter in SUMO2). The tract at residues 571 to 594 is disordered; that stretch reads ISSGQGTPSTTNSTSSTPSSPTIT. Over residues 577–594 the composition is skewed to low complexity; sequence TPSTTNSTSSTPSSPTIT. Lys641 is covalently cross-linked (Glycyl lysine isopeptide (Lys-Gly) (interchain with G-Cter in SUMO2)). Residues 643 to 712 are disordered; that stretch reads TNIDHGQPRP…PAGADSTHKV (70 aa). 3 positions are modified to phosphoserine: Ser654, Ser660, and Ser667. The segment covering 654–666 has biased composition (polar residues); the sequence is SNRTVQSPNSSVP. Over residues 685–707 the composition is skewed to low complexity; it reads SPSASSVGSRGSSGSSSKPAGAD. Residues Lys702 and Lys711 each participate in a glycyl lysine isopeptide (Lys-Gly) (interchain with G-Cter in SUMO2) cross-link. A Glycyl lysine isopeptide (Lys-Gly) (interchain with G-Cter in SUMO1); alternate cross-link involves residue Lys723. A Glycyl lysine isopeptide (Lys-Gly) (interchain with G-Cter in SUMO2); alternate cross-link involves residue Lys723. Residue Lys741 forms a Glycyl lysine isopeptide (Lys-Gly) (interchain with G-Cter in SUMO2) linkage. The residue at position 744 (Ser744) is a Phosphoserine. A nuclear receptor binding site (NRBS) region spans residues 754–779; it reads NYPRSILTSLLLNSSQSSTSEETVLR. Residues 766–824 form a disordered region; that stretch reads NSSQSSTSEETVLRSDAPDSTGDQPGLHQDNSSNGKSEWLDPSQKSPLHVGETRKEDDP. A Phosphoserine; by ATM modification is found at Ser768. A Glycyl lysine isopeptide (Lys-Gly) (interchain with G-Cter in SUMO2) cross-link involves residue Lys801. A Phosphoserine modification is found at Ser808. Lys810 is covalently cross-linked (Glycyl lysine isopeptide (Lys-Gly) (interchain with G-Cter in SUMO2)). Ser811 is modified (phosphoserine). Thr818 bears the Phosphothreonine mark. A PHD-type zinc finger spans residues 826-873; that stretch reads EDWCAVCQNGGELLCCEKCPKVFHLSCHVPTLTNFPSGEWICTFCRDL. Residues 834–840 form an interaction with histone H3 that is not methylated at 'Lys-4' (H3K4me0) region; that stretch reads NGGELLC. A Glycyl lysine isopeptide (Lys-Gly) (interchain with G-Cter in SUMO2) cross-link involves residue Lys875. Residues 891–907 carry the Nuclear localization signal motif; it reads KKKTEGLVKLTPIDKRK. The region spanning 899 to 1004 is the Bromo domain; the sequence is KLTPIDKRKC…NYFEELLKNL (106 aa). Lys949 is covalently cross-linked (Glycyl lysine isopeptide (Lys-Gly) (interchain with G-Cter in SUMO2)). The interval 979–980 is interaction with histone H3 that is acetylated at 'Lys-23' (H3K23ac); sequence FN. Lys992 participates in a covalent cross-link: Glycyl lysine isopeptide (Lys-Gly) (interchain with G-Cter in SUMO2). Positions 1011–1026 are enriched in basic and acidic residues; sequence PKPEFRNESEDNKFSD. A disordered region spans residues 1011-1036; sequence PKPEFRNESEDNKFSDDSDDDFVQPR. Phosphoserine occurs at positions 1019, 1025, and 1028. Residue Lys1041 forms a Glycyl lysine isopeptide (Lys-Gly) (interchain with G-Cter in SUMO2) linkage. Ser1042 is modified (phosphoserine).

In terms of assembly, interacts with CARM1, NCOA2/GRIP1, PML, KAT5/TIP60, BRD7, CBX1, CBX3 and CBX5. Part of a coactivator complex containing TRIM24, NCOA2 and CARM1. Interacts with NR3C2/MCR. Interacts with the ligand-binding domain of estrogen receptors (in vitro). Interaction with DNA-bound estrogen receptors requires the presence of estradiol. Interacts with AR and p53/TP53. Interacts (via bromo domain) with histone H3 (via N-terminus), provided that it is not methylated at 'Lys-4' (H3K4me0). Does not interact with histone H3 that is methylated at 'Lys-4' (H3K4me1, H3K4me2 or H3K4me3). Interacts (via bromo domain) with histone H3 (via N-terminus) that is acetylated at 'Lys-23' (H3K23ac). Has the highest affinity for histone H3 that is both unmodified at 'Lys-4' (H3K4me0) and acetylated at 'Lys-23' (H3K23ac). Has very low affinity for histone H3 that is methylated at 'Lys-9' (H3K9me), or acetylated at both 'Lys-9' (H3K9ac) and 'Lys-14' (H3K14ac), or acetylated at 'Lys-27' (H3K27ac) (in vitro). Interacts with TRIM16. Post-translationally, phosphorylated at Ser-768 by ATM kinase induces ubiquitination and degradation during DNA damage. Sumoylated. In terms of processing, undergoes ubiquitination-mediated degradation in response to DNA damage.

It localises to the nucleus. The protein resides in the cytoplasm. Its subcellular location is the mitochondrion. The catalysed reaction is S-ubiquitinyl-[E2 ubiquitin-conjugating enzyme]-L-cysteine + [acceptor protein]-L-lysine = [E2 ubiquitin-conjugating enzyme]-L-cysteine + N(6)-ubiquitinyl-[acceptor protein]-L-lysine.. The protein operates within protein modification; protein ubiquitination. In terms of biological role, transcriptional coactivator that interacts with numerous nuclear receptors and coactivators and modulates the transcription of target genes. Interacts with chromatin depending on histone H3 modifications, having the highest affinity for histone H3 that is both unmodified at 'Lys-4' (H3K4me0) and acetylated at 'Lys-23' (H3K23ac). Has E3 protein-ubiquitin ligase activity. During the DNA damage response, participates in an autoregulatory feedback loop with TP53. Early in response to DNA damage, ATM kinase phosphorylates TRIM24 leading to its ubiquitination and degradation. After sufficient DNA repair has occurred, TP53 activates TRIM24 transcription, ultimately leading to TRIM24-mediated TP53 ubiquitination and degradation. Plays a role in the regulation of cell proliferation and apoptosis, at least in part via its effects on p53/TP53 levels. Up-regulates ligand-dependent transcription activation by AR, GCR/NR3C1, thyroid hormone receptor (TR) and ESR1. Modulates transcription activation by retinoic acid (RA) receptors, including RARA. Plays a role in regulating retinoic acid-dependent proliferation of hepatocytes. Also participates in innate immunity by mediating the specific 'Lys-63'-linked ubiquitination of TRAF3 leading to activation of downstream signal transduction of the type I IFN pathway. Additionally, negatively regulates NLRP3/CASP1/IL-1beta-mediated pyroptosis and cell migration probably by ubiquitinating NLRP3. The chain is Transcription intermediary factor 1-alpha (TRIM24) from Homo sapiens (Human).